The primary structure comprises 77 residues: TSC22 domain family protein 3 (77 aa).

Met1 is subject to N-acetylmethionine. The leucine-zipper stretch occupies residues Leu19 to Leu40. Residues Lys41–Val77 form a disordered region. The residue at position 45 (Ser45) is a Phosphoserine. Low complexity predominate over residues Ala68–Val77.

Belongs to the TSC-22/Dip/Bun family. In terms of assembly, can form homodimers, however it is likely to function as a monomer. Interacts with AP1 and NFKB1. Interacts with MYOD1. Interacts with HDAC1; this interaction affects HDAC1 activity on MYOG promoter and thus inhibits MYOD1 transcriptional activity.

It localises to the cytoplasm. The protein localises to the nucleus. Functionally, protects T-cells from IL2 deprivation-induced apoptosis through the inhibition of FOXO3A transcriptional activity that leads to the down-regulation of the pro-apoptotic factor BCL2L11. In macrophages, plays a role in the anti-inflammatory and immunosuppressive effects of glucocorticoids and IL10. In T-cells, inhibits anti-CD3-induced NFKB1 nuclear translocation. In vitro, suppresses AP1 and NFKB1 DNA-binding activities. Inhibits myogenic differentiation and mediates anti-myogenic effects of glucocorticoids by binding and regulating MYOD1 and HDAC1 transcriptional activity resulting in reduced expression of MYOG. The protein is TSC22 domain family protein 3 (TSC22D3) of Sus scrofa (Pig).